Consider the following 300-residue polypeptide: N-acetylmuramic acid 6-phosphate etherase 1 (300 aa).

The SIS domain occupies 59–222 (AAERFKKGGR…STGIMVKVGN (164 aa)). Catalysis depends on Glu-87, which acts as the Proton donor. Glu-118 is a catalytic residue.

It belongs to the GCKR-like family. MurNAc-6-P etherase subfamily. As to quaternary structure, homodimer.

It carries out the reaction N-acetyl-D-muramate 6-phosphate + H2O = N-acetyl-D-glucosamine 6-phosphate + (R)-lactate. It participates in amino-sugar metabolism; N-acetylmuramate degradation. Its function is as follows. Specifically catalyzes the cleavage of the D-lactyl ether substituent of MurNAc 6-phosphate, producing GlcNAc 6-phosphate and D-lactate. This Enterococcus faecalis (strain ATCC 700802 / V583) protein is N-acetylmuramic acid 6-phosphate etherase 1.